The following is a 482-amino-acid chain: Probable glycine dehydrogenase (decarboxylating) subunit 2 (482 aa).

The residue at position 267 (Lys267) is an N6-(pyridoxal phosphate)lysine.

This sequence belongs to the GcvP family. C-terminal subunit subfamily. As to quaternary structure, the glycine cleavage system is composed of four proteins: P, T, L and H. In this organism, the P 'protein' is a heterodimer of two subunits. It depends on pyridoxal 5'-phosphate as a cofactor.

It carries out the reaction N(6)-[(R)-lipoyl]-L-lysyl-[glycine-cleavage complex H protein] + glycine + H(+) = N(6)-[(R)-S(8)-aminomethyldihydrolipoyl]-L-lysyl-[glycine-cleavage complex H protein] + CO2. The glycine cleavage system catalyzes the degradation of glycine. The P protein binds the alpha-amino group of glycine through its pyridoxal phosphate cofactor; CO(2) is released and the remaining methylamine moiety is then transferred to the lipoamide cofactor of the H protein. In Aquifex aeolicus (strain VF5), this protein is Probable glycine dehydrogenase (decarboxylating) subunit 2.